Reading from the N-terminus, the 904-residue chain is E3 ubiquitin-protein ligase HACE1 (904 aa).

ANK repeat units lie at residues Ala34 to Tyr63, Val68 to Tyr97, Ser101 to Ile130, Glu134 to Val163, Met167 to Arg196, Ser200 to Asp230, and Asn232 to Gln261. The HECT domain occupies Ser569 to Ala904. Cys871 functions as the Glycyl thioester intermediate in the catalytic mechanism.

The protein resides in the golgi apparatus. Its subcellular location is the golgi stack membrane. It localises to the cytoplasm. It is found in the endoplasmic reticulum. It catalyses the reaction S-ubiquitinyl-[E2 ubiquitin-conjugating enzyme]-L-cysteine + [acceptor protein]-L-lysine = [E2 ubiquitin-conjugating enzyme]-L-cysteine + N(6)-ubiquitinyl-[acceptor protein]-L-lysine.. The protein operates within protein modification; protein ubiquitination. E3 ubiquitin-protein ligase involved in Golgi membrane fusion and regulation of small GTPases. Acts as a regulator of Golgi membrane dynamics during the cell cycle: recruited to Golgi membrane by Rab proteins and regulates postmitotic Golgi membrane fusion. Acts by mediating ubiquitination during mitotic Golgi disassembly, ubiquitination serving as a signal for Golgi reassembly later, after cell division. This is E3 ubiquitin-protein ligase HACE1 (hace1) from Danio rerio (Zebrafish).